Reading from the N-terminus, the 508-residue chain is Photosystem II CP47 reaction center protein (508 aa).

6 helical membrane-spanning segments follow: residues 21–36 (SVHI…WAGS), 101–115 (IMFS…IWHW), 140–156 (GIHL…FGAF), 203–218 (IAAG…FHLS), 237–252 (VLSS…AFVV), and 457–472 (SFAL…HGAR).

It belongs to the PsbB/PsbC family. PsbB subfamily. As to quaternary structure, PSII is composed of 1 copy each of membrane proteins PsbA, PsbB, PsbC, PsbD, PsbE, PsbF, PsbH, PsbI, PsbJ, PsbK, PsbL, PsbM, PsbT, PsbX, PsbY, PsbZ, Psb30/Ycf12, at least 3 peripheral proteins of the oxygen-evolving complex and a large number of cofactors. It forms dimeric complexes. Requires Binds multiple chlorophylls. PSII binds additional chlorophylls, carotenoids and specific lipids. as cofactor.

Its subcellular location is the plastid. It is found in the chloroplast thylakoid membrane. Its function is as follows. One of the components of the core complex of photosystem II (PSII). It binds chlorophyll and helps catalyze the primary light-induced photochemical processes of PSII. PSII is a light-driven water:plastoquinone oxidoreductase, using light energy to abstract electrons from H(2)O, generating O(2) and a proton gradient subsequently used for ATP formation. This chain is Photosystem II CP47 reaction center protein, found in Ceratophyllum demersum (Rigid hornwort).